The primary structure comprises 97 residues: UPF0235 protein PFL_5841 (97 aa).

This sequence belongs to the UPF0235 family.

This Pseudomonas fluorescens (strain ATCC BAA-477 / NRRL B-23932 / Pf-5) protein is UPF0235 protein PFL_5841.